The following is a 904-amino-acid chain: Protein translocase subunit SecA (904 aa).

Residues glutamine 89, glycine 107–threonine 111, and aspartate 502 each bind ATP. Residues valine 872 to serine 892 form a disordered region. Zn(2+)-binding residues include cysteine 888, cysteine 890, cysteine 899, and histidine 900.

This sequence belongs to the SecA family. In terms of assembly, part of the essential protein translocation apparatus which comprises SecA, SecYEG and auxiliary proteins SecDF-YajC and YidC. Homodimer. Requires Zn(2+) as cofactor.

It localises to the cell inner membrane. It is found in the cytoplasm. It catalyses the reaction ATP + H2O + cellular proteinSide 1 = ADP + phosphate + cellular proteinSide 2.. Its function is as follows. Part of the Sec protein translocase complex. Interacts with the SecYEG preprotein conducting channel. Has a central role in coupling the hydrolysis of ATP to the transfer of proteins into and across the cell membrane, serving both as a receptor for the preprotein-SecB complex and as an ATP-driven molecular motor driving the stepwise translocation of polypeptide chains across the membrane. This chain is Protein translocase subunit SecA, found in Rhodobacter capsulatus (Rhodopseudomonas capsulata).